We begin with the raw amino-acid sequence, 181 residues long: Cell division protein ZapC (181 aa).

The protein belongs to the ZapC family. In terms of assembly, interacts directly with FtsZ.

The protein resides in the cytoplasm. Functionally, contributes to the efficiency of the cell division process by stabilizing the polymeric form of the cell division protein FtsZ. Acts by promoting interactions between FtsZ protofilaments and suppressing the GTPase activity of FtsZ. This is Cell division protein ZapC from Shewanella woodyi (strain ATCC 51908 / MS32).